A 274-amino-acid chain; its full sequence is Penicillin-insensitive murein endopeptidase (274 aa).

Residues 1–19 (MKNTVIALLALLASAGSLA) form the signal peptide. 3 disulfide bridges follow: C44–C265, C187–C235, and C216–C223. Residues H110, H113, D120, D147, H150, and H211 each coordinate Zn(2+). The disordered stretch occupies residues 224–263 (EDQAPPPPGDGCGAELQSWFEPPKPGSTPPVKKTPPPLPP). Over residues 245–263 (PPKPGSTPPVKKTPPPLPP) the composition is skewed to pro residues.

The protein belongs to the peptidase M74 family. In terms of assembly, dimer. The cofactor is Zn(2+).

The protein localises to the periplasm. Its function is as follows. Murein endopeptidase that cleaves the D-alanyl-meso-2,6-diamino-pimelyl amide bond that connects peptidoglycan strands. Likely plays a role in the removal of murein from the sacculus. This chain is Penicillin-insensitive murein endopeptidase, found in Klebsiella pneumoniae (strain 342).